Here is a 76-residue protein sequence, read N- to C-terminus: Small ribosomal subunit protein eS17 (76 aa).

It belongs to the eukaryotic ribosomal protein eS17 family.

The protein is Small ribosomal subunit protein eS17 of Metallosphaera sedula (strain ATCC 51363 / DSM 5348 / JCM 9185 / NBRC 15509 / TH2).